Consider the following 111-residue polypeptide: Large ribosomal subunit protein P2 (111 aa).

A disordered region spans residues 62-111; that stretch reads LASVPSGGAGGAAAAGGAAAAGGAAEAAPEEAKEEEKEESDDDMGFGLFD. The segment covering 76–88 has biased composition (low complexity); the sequence is AGGAAAAGGAAEA. Serine 101 carries the post-translational modification Phosphoserine.

This sequence belongs to the eukaryotic ribosomal protein P1/P2 family. In terms of assembly, P1 and P2 exist as dimers at the large ribosomal subunit.

Plays an important role in the elongation step of protein synthesis. In Podospora anserina (Pleurage anserina), this protein is Large ribosomal subunit protein P2.